The sequence spans 479 residues: MPQFPWKDNDAELSPLEAFLAEWDDPEAEEEDFRNDFFRGSEGRRKKAAVMLMAIWTVVITLHYWVWGSWLVWALTGALSLQALRLMKATPEEAPPLLTGDASTVPYPQVCLMVAAKNEEAVIGKIVQQLCSLDYPGDRHEVWIVDDNSTDRTPAILDQLRQQYPQLKVVRRGAGASGGKSGALNEVLAQTQGDIVGVFDADANVPKDLLRRVVPYFASPTFGALQVRKAIANEAVNFWTRGQGAEMALDAYFQQQRIVTGGIGELRGNGQFVARQALDAVGGWNEQTITDDLDLTIRLHLHQWKVGILVNPPVEEEGVTTAIALWHQRNRWAEGGYQRYLDYWRWICTQPMGWKKKLDLFSFLLMQYLLPTAAVPDLLMALWQRRFPLLTPLSYLAIGFSCWGMYYGLKRLTPSEGESPWQQMPALLARTIGGTIYMFHWLIIMPAVTARMAFRPKRLKWVKTVHGAATEDALELKQS.

4 consecutive transmembrane segments (helical) span residues 48 to 68 (AAVM…WVWG), 363 to 383 (FLLM…MALW), 389 to 409 (LLTP…YYGL), and 428 to 448 (LART…MPAV).

This sequence belongs to the glycosyltransferase 2 family. The cofactor is Mg(2+).

The protein localises to the membrane. It catalyses the reaction a 1,2-diacyl-sn-glycerol + UDP-alpha-D-glucose = a 1,2-diacyl-3-O-(beta-D-glucopyranosyl)-sn-glycerol + UDP + H(+). In terms of biological role, glucosyltransferase involved in the biosynthesis of the non-bilayer-forming membrane lipid beta-monoglucosyldiacylglycerol which contributes to regulate the properties and stability of the membrane. Catalyzes the transfer of a glucosyl residue from UDP-Glc to diacylglycerol (DAG) acceptor to form the corresponding beta-glucosyl-DAG (1,2-diacyl-3-O-(beta-D-glucopyranosyl)-sn-glycerol). It can only use UDP-Glc as sugar donor. Two types of DAG (dipalmitoyl-DAG (DPDAG) and 1-oleoyl-2-palmitoyl-DAG (OPDAG)) can be used as sugar acceptors, but OPDAG is preferred. The polypeptide is Beta-monoglucosyldiacylglycerol synthase (Synechocystis sp. (strain ATCC 27184 / PCC 6803 / Kazusa)).